Consider the following 819-residue polypeptide: Lon protease (819 aa).

Residues 1–14 (MNSTNNTDSQNLDP) show a composition bias toward polar residues. Positions 1-40 (MNSTNNTDSQNLDPNASEVEKLLDESAEAEEKVDDHTPPS) are disordered. Over residues 18–38 (EVEKLLDESAEAEEKVDDHTP) the composition is skewed to basic and acidic residues. In terms of domain architecture, Lon N-terminal spans 42-239 (LFILPLNKRP…KALVLLKKEL (198 aa)). 392 to 399 (GPPGVGKT) contacts ATP. In terms of domain architecture, Lon proteolytic spans 634–818 (KTPVGVATGL…DDVFKIAFPG (185 aa)). Catalysis depends on residues serine 724 and lysine 767.

This sequence belongs to the peptidase S16 family. As to quaternary structure, homohexamer. Organized in a ring with a central cavity.

It is found in the cytoplasm. It carries out the reaction Hydrolysis of proteins in presence of ATP.. In terms of biological role, ATP-dependent serine protease that mediates the selective degradation of mutant and abnormal proteins as well as certain short-lived regulatory proteins. Required for cellular homeostasis and for survival from DNA damage and developmental changes induced by stress. Degrades polypeptides processively to yield small peptide fragments that are 5 to 10 amino acids long. Binds to DNA in a double-stranded, site-specific manner. This chain is Lon protease, found in Chlamydia trachomatis serovar D (strain ATCC VR-885 / DSM 19411 / UW-3/Cx).